A 447-amino-acid polypeptide reads, in one-letter code: Tektin-4 (447 aa).

Coiled coils occupy residues 69–144 (ADRD…ALDA) and 304–423 (FGRR…TNSL). The span at 72–81 (DQSERQRHES) shows a compositional bias: basic and acidic residues. The disordered stretch occupies residues 72–104 (DQSERQRHESQQLAAETEALAQRTQQDSTRKVG). Residues 82–97 (QQLAAETEALAQRTQQ) are compositionally biased toward low complexity.

This sequence belongs to the tektin family. In terms of assembly, microtubule inner protein component of sperm flagellar doublet microtubules. Post-translationally, ubiquitinated, leading to its degradation. Deubiquitinated by USP16, promoting its stability. Expressed in trachea multiciliated cells.

The protein resides in the cytoplasm. The protein localises to the cytoskeleton. Its subcellular location is the cilium axoneme. It is found in the flagellum axoneme. Microtubule inner protein (MIP) part of the dynein-decorated doublet microtubules (DMTs) in cilia and flagellar axoneme. Forms filamentous polymers in the walls of ciliary and flagellar microtubules. Contributes to normal sperm motility. This chain is Tektin-4 (TEKT4), found in Bos taurus (Bovine).